The primary structure comprises 1189 residues: MLPGAEIEMLGGDCFEGSYEDHQIFREVFFGSDPGNTTKRCLVTGAINFECDSSKNVNSSLSSNSVVTSGYACPQGFEASASRDGSDFNTKAKRVKLSGNKHLDARDEKGSALHGFPTSDIARETIPLHLVESSNKGVSTSSYLLKHSIVKGREVYLGGIVSGKCKSLNLDKCDGKEFKAIASPVSQESFATRMISVGASTPHSEKACFPLQLNNGSKVSPNELIMSKTCLKIDPKEDPRPLLYKYVCKVLTAARWKIEKRERSAGRKHVDTFYISPEGRKFREFGSAWKALGGILLADRKLMDTGTKKWTGINDFWSDLSLTLLDIEENMKNLNLANTRALWWSALEPFVVVVFISKQVGSLRKGNKVEVARNSNPDKLKKEDTICLNLISGCPESVLTVSEGSHLVHDVDANQEIHSDLEVQTKISSQKVSSRLERQSIIGKEISGTHEQEASKGIVASKLIAEDMHESVMRKNLHRRSKKISDIKPASLDQHDSLDSNSLNSFEFQDKEMGNIHLVSKGSRDERLRNEKMNNSCCNSKKGRKKARKHYTQDDDLMGSTITRNKGKFSRSSQKKKTQKPKARTKKRNNRGGCRLLPRSSSNVENHFFQGNWSILGPRTVLSWLIATKVISRDEVIQLRDPDDDTVVKTGLVTKDGVVCTCCNKTVSLSEFKNHAGFNQNCPCLNLFMGSGKPFASCQLEAWSAEYKARRNGWRLEKASDDDPNDDSCGVCGDGGELICCDNCPSTFHQACLSMQVLPEGSWYCSSCTCWICSELVSDNAERSQDFKCSQCAHKYHGTCLQGISKRRKLFPETYFCGKNCEKVYNGLSSRVGIINPNADGLSWSILKCFQEDGMVHSARRLALKAECNSKLAVALSIMEESFLSMVDPRTGIDMIPHVLYNWGSTFARLDFDGFYTVVVEKDDVMISVASIRVHGVTIAEMPLVATCSKYRRQGMCRILVAAIEEMLMSLKVEKLVVAALPSLVETWTEGFGFKPMDDEERDALKRINLMVFPGTTLLKKTLYESTKPSTMKGVCLSKERNNPSNKEADLEPGLDKAGSPMSTQVESCDQMVPAGSDDEPSPGFPVPLGADQTEPTSETENPSRDSNANDRPNKTTVVSIGEEEEEECLQKDVSKLSEEGKETTRASSSSAALEEVSGLGLGVVNNVSDEMLLCVDEQLDSDSSQDSE.

2 disordered regions span residues 475–498 (KNLH…HDSL) and 523–597 (SRDE…CRLL). The span at 523–532 (SRDERLRNEK) shows a compositional bias: basic and acidic residues. 2 stretches are compositionally biased toward basic residues: residues 541–550 (KKGRKKARKH) and 565–590 (NKGK…KRNN). The segment at 726-771 (DDSCGVCGDGGELICCDNCPSTFHQACLSMQVLPEGSWYCSSCTCW) adopts a PHD-type 1 zinc-finger fold. The PHD-type 2; degenerate zinc finger occupies 767 to 823 (SCTCWICSELVSDNAERSQDFKCSQCAHKYHGTCLQGISKRRKLFPETYFCGKNCEK). An N-acetyltransferase domain is found at 879–1024 (MEESFLSMVD…GTTLLKKTLY (146 aa)). Residues 1031 to 1157 (TMKGVCLSKE…SSSSAALEEV (127 aa)) form a disordered region. 3 stretches are compositionally biased toward basic and acidic residues: residues 1038–1050 (SKER…KEAD), 1102–1114 (NPSR…DRPN), and 1129–1145 (CLQK…KETT). Residues 1147–1157 (ASSSSAALEEV) show a composition bias toward low complexity.

In terms of assembly, interacts (via N-terminus) with IDM2. Interacts with IMD3. Part of a complex made of MBD7, IDM1, IDM2 and IDM3. As to expression, expressed in cotyledons and hypocotyls in young seedlings.

The protein localises to the nucleus. In terms of biological role, histone H3 acetyltransferase that binds methylated DNA at chromatin sites lacking histone H3K4 di- or trimethylation and catalyzes H3K18 and H3K23 acetylation. Prevents the transcriptional silencing of transgenes and of some endogenous genes. Requires the presence of IDM2 for efficient H3K18 acetylation, but not for H3K23 acetylation. The polypeptide is Increased DNA methylation 1 (Arabidopsis thaliana (Mouse-ear cress)).